Consider the following 146-residue polypeptide: Anti-sigma F factor (146 aa).

This sequence belongs to the anti-sigma-factor family.

It carries out the reaction L-seryl-[protein] + ATP = O-phospho-L-seryl-[protein] + ADP + H(+). The enzyme catalyses L-threonyl-[protein] + ATP = O-phospho-L-threonyl-[protein] + ADP + H(+). In terms of biological role, binds to sigma F and blocks its ability to form an RNA polymerase holoenzyme (E-sigma F). Phosphorylates SpoIIAA on a serine residue. This phosphorylation may enable SpoIIAA to act as an anti-anti-sigma factor that counteracts SpoIIAB and thus releases sigma F from inhibition. This is Anti-sigma F factor from Geobacillus thermodenitrificans (strain NG80-2).